Here is a 473-residue protein sequence, read N- to C-terminus: Ribulose bisphosphate carboxylase large chain (473 aa).

Residues asparagine 116 and threonine 166 each coordinate substrate. Lysine 168 acts as the Proton acceptor in catalysis. Lysine 170 serves as a coordination point for substrate. Mg(2+) is bound by residues lysine 194, aspartate 196, and glutamate 197. The residue at position 194 (lysine 194) is an N6-carboxylysine. Histidine 287 functions as the Proton acceptor in the catalytic mechanism. Substrate is bound by residues arginine 288, histidine 320, and serine 372.

This sequence belongs to the RuBisCO large chain family. Type I subfamily. As to quaternary structure, heterohexadecamer of 8 large chains and 8 small chains. It depends on Mg(2+) as a cofactor.

The enzyme catalyses 2 (2R)-3-phosphoglycerate + 2 H(+) = D-ribulose 1,5-bisphosphate + CO2 + H2O. The catalysed reaction is D-ribulose 1,5-bisphosphate + O2 = 2-phosphoglycolate + (2R)-3-phosphoglycerate + 2 H(+). In terms of biological role, ruBisCO catalyzes two reactions: the carboxylation of D-ribulose 1,5-bisphosphate, the primary event in carbon dioxide fixation, as well as the oxidative fragmentation of the pentose substrate. Both reactions occur simultaneously and in competition at the same active site. This Cupriavidus metallidurans (strain ATCC 43123 / DSM 2839 / NBRC 102507 / CH34) (Ralstonia metallidurans) protein is Ribulose bisphosphate carboxylase large chain.